The chain runs to 606 residues: Aspartate--tRNA(Asp/Asn) ligase (606 aa).

Glu-172 is an L-aspartate binding site. The segment at 196-199 (QLFK) is aspartate. L-aspartate is bound at residue Arg-218. ATP is bound by residues 218 to 220 (RDE) and Gln-227. His-448 lines the L-aspartate pocket. An ATP-binding site is contributed by Glu-482. Arg-489 contacts L-aspartate. 534 to 537 (GWDR) contributes to the ATP binding site.

The protein belongs to the class-II aminoacyl-tRNA synthetase family. Type 1 subfamily. Homodimer.

It is found in the cytoplasm. The enzyme catalyses tRNA(Asx) + L-aspartate + ATP = L-aspartyl-tRNA(Asx) + AMP + diphosphate. Its function is as follows. Aspartyl-tRNA synthetase with relaxed tRNA specificity since it is able to aspartylate not only its cognate tRNA(Asp) but also tRNA(Asn). Reaction proceeds in two steps: L-aspartate is first activated by ATP to form Asp-AMP and then transferred to the acceptor end of tRNA(Asp/Asn). This chain is Aspartate--tRNA(Asp/Asn) ligase, found in Saccharopolyspora erythraea (strain ATCC 11635 / DSM 40517 / JCM 4748 / NBRC 13426 / NCIMB 8594 / NRRL 2338).